The following is a 148-amino-acid chain: Deoxyuridine 5'-triphosphate nucleotidohydrolase (148 aa).

Residues 67–69 (RSG), Asn-80, 84–86 (LID), and Met-94 contribute to the substrate site.

It belongs to the dUTPase family. Requires Mg(2+) as cofactor.

It catalyses the reaction dUTP + H2O = dUMP + diphosphate + H(+). The protein operates within pyrimidine metabolism; dUMP biosynthesis; dUMP from dCTP (dUTP route): step 2/2. In terms of biological role, this enzyme is involved in nucleotide metabolism: it produces dUMP, the immediate precursor of thymidine nucleotides and it decreases the intracellular concentration of dUTP so that uracil cannot be incorporated into DNA. This chain is Deoxyuridine 5'-triphosphate nucleotidohydrolase, found in Francisella tularensis subsp. holarctica (strain FTNF002-00 / FTA).